The primary structure comprises 197 residues: Isopentenyl-diphosphate Delta-isomerase (197 aa).

Mn(2+)-binding residues include H41 and H48. In terms of domain architecture, Nudix hydrolase spans Q46–A183. C83 is an active-site residue. Residue C83 participates in Mg(2+) binding. H85 lines the Mn(2+) pocket. Mg(2+) is bound at residue E103. Mn(2+) is bound by residues E130 and E132. The active site involves E132.

Belongs to the IPP isomerase type 1 family. Requires Mg(2+) as cofactor. It depends on Mn(2+) as a cofactor.

It localises to the cytoplasm. The enzyme catalyses isopentenyl diphosphate = dimethylallyl diphosphate. The protein operates within isoprenoid biosynthesis; dimethylallyl diphosphate biosynthesis; dimethylallyl diphosphate from isopentenyl diphosphate: step 1/1. Functionally, catalyzes the 1,3-allylic rearrangement of the homoallylic substrate isopentenyl (IPP) to its highly electrophilic allylic isomer, dimethylallyl diphosphate (DMAPP). The sequence is that of Isopentenyl-diphosphate Delta-isomerase from Streptomyces avermitilis (strain ATCC 31267 / DSM 46492 / JCM 5070 / NBRC 14893 / NCIMB 12804 / NRRL 8165 / MA-4680).